The primary structure comprises 372 residues: 4-hydroxy-3-methylbut-2-en-1-yl diphosphate synthase (flavodoxin) (372 aa).

C270, C273, C305, and E312 together coordinate [4Fe-4S] cluster.

Belongs to the IspG family. The cofactor is [4Fe-4S] cluster.

The catalysed reaction is (2E)-4-hydroxy-3-methylbut-2-enyl diphosphate + oxidized [flavodoxin] + H2O + 2 H(+) = 2-C-methyl-D-erythritol 2,4-cyclic diphosphate + reduced [flavodoxin]. Its pathway is isoprenoid biosynthesis; isopentenyl diphosphate biosynthesis via DXP pathway; isopentenyl diphosphate from 1-deoxy-D-xylulose 5-phosphate: step 5/6. Converts 2C-methyl-D-erythritol 2,4-cyclodiphosphate (ME-2,4cPP) into 1-hydroxy-2-methyl-2-(E)-butenyl 4-diphosphate. The polypeptide is 4-hydroxy-3-methylbut-2-en-1-yl diphosphate synthase (flavodoxin) (Alteromonas mediterranea (strain DSM 17117 / CIP 110805 / LMG 28347 / Deep ecotype)).